Reading from the N-terminus, the 152-residue chain is Transcriptional repressor NrdR (152 aa).

A disordered region spans residues 1–21 (MRCPFCGNGDTQVKDSRPTED). The segment at 3-34 (CPFCGNGDTQVKDSRPTEDSAAIRRRRFCPAC) is a zinc-finger region. The span at 12–21 (QVKDSRPTED) shows a compositional bias: basic and acidic residues. In terms of domain architecture, ATP-cone spans 49-139 (LVIVKKDGQR…VYRNFREAKD (91 aa)).

It belongs to the NrdR family. Requires Zn(2+) as cofactor.

Its function is as follows. Negatively regulates transcription of bacterial ribonucleotide reductase nrd genes and operons by binding to NrdR-boxes. The protein is Transcriptional repressor NrdR of Rhodospirillum rubrum (strain ATCC 11170 / ATH 1.1.1 / DSM 467 / LMG 4362 / NCIMB 8255 / S1).